We begin with the raw amino-acid sequence, 153 residues long: UPF0260 protein YcgN (153 aa).

This sequence belongs to the UPF0260 family.

The chain is UPF0260 protein YcgN from Escherichia coli O6:K15:H31 (strain 536 / UPEC).